The primary structure comprises 232 residues: Ribose-5-phosphate isomerase A (232 aa).

Residues 28-31, 83-86, and 96-99 contribute to the substrate site; these read TGST, DGAD, and KGGG. Residue glutamate 105 is the Proton acceptor of the active site. Lysine 123 provides a ligand contact to substrate.

The protein belongs to the ribose 5-phosphate isomerase family. As to quaternary structure, homodimer.

It carries out the reaction aldehydo-D-ribose 5-phosphate = D-ribulose 5-phosphate. Its pathway is carbohydrate degradation; pentose phosphate pathway; D-ribose 5-phosphate from D-ribulose 5-phosphate (non-oxidative stage): step 1/1. Functionally, catalyzes the reversible conversion of ribose-5-phosphate to ribulose 5-phosphate. The sequence is that of Ribose-5-phosphate isomerase A from Rhodopseudomonas palustris (strain HaA2).